Here is a 235-residue protein sequence, read N- to C-terminus: Lipoprotein-releasing system ATP-binding protein LolD (235 aa).

The 231-residue stretch at 5-235 (LECRDIRKVY…LMTESASVEG (231 aa)) folds into the ABC transporter domain. An ATP-binding site is contributed by 41-48 (GSSGSGKS).

Belongs to the ABC transporter superfamily. Lipoprotein translocase (TC 3.A.1.125) family. In terms of assembly, the complex is composed of two ATP-binding proteins (LolD) and two transmembrane proteins (LolC and LolE).

The protein localises to the cell inner membrane. Part of the ABC transporter complex LolCDE involved in the translocation of mature outer membrane-directed lipoproteins, from the inner membrane to the periplasmic chaperone, LolA. Responsible for the formation of the LolA-lipoprotein complex in an ATP-dependent manner. The chain is Lipoprotein-releasing system ATP-binding protein LolD from Vibrio parahaemolyticus serotype O3:K6 (strain RIMD 2210633).